The primary structure comprises 154 residues: 6,7-dimethyl-8-ribityllumazine synthase (154 aa).

5-amino-6-(D-ribitylamino)uracil-binding positions include phenylalanine 15, 47–49 (TFD), and 71–73 (AVI). 76–77 (ET) contributes to the (2S)-2-hydroxy-3-oxobutyl phosphate binding site. Histidine 79 functions as the Proton donor in the catalytic mechanism. Leucine 104 contributes to the 5-amino-6-(D-ribitylamino)uracil binding site. Arginine 119 contacts (2S)-2-hydroxy-3-oxobutyl phosphate.

It belongs to the DMRL synthase family.

It carries out the reaction (2S)-2-hydroxy-3-oxobutyl phosphate + 5-amino-6-(D-ribitylamino)uracil = 6,7-dimethyl-8-(1-D-ribityl)lumazine + phosphate + 2 H2O + H(+). It functions in the pathway cofactor biosynthesis; riboflavin biosynthesis; riboflavin from 2-hydroxy-3-oxobutyl phosphate and 5-amino-6-(D-ribitylamino)uracil: step 1/2. Catalyzes the formation of 6,7-dimethyl-8-ribityllumazine by condensation of 5-amino-6-(D-ribitylamino)uracil with 3,4-dihydroxy-2-butanone 4-phosphate. This is the penultimate step in the biosynthesis of riboflavin. The sequence is that of 6,7-dimethyl-8-ribityllumazine synthase from Saccharolobus islandicus (strain L.S.2.15 / Lassen #1) (Sulfolobus islandicus).